The primary structure comprises 840 residues: Aconitase AMT8 (840 aa).

258–260 (DSH) lines the substrate pocket. Positions 450, 513, and 516 each coordinate [4Fe-4S] cluster. Substrate-binding positions include arginine 536, arginine 541, and 709 to 710 (SR).

The protein belongs to the aconitase/IPM isomerase family.

It participates in mycotoxin biosynthesis. Functionally, aconitase; part of the gene clusters that mediate the biosynthesis of AM-toxins, host-selective toxins (HSTs) causing Alternaria blotch on apple, a worldwide distributed disease. AM-toxins are cyclic depsipeptides containing the 3 residues 2-hydroxy-isovaleric acid (2-HIV), dehydroalanine, L-alanine which are common for all 3 AM-toxins I to III. The fourth precursor is L-alpha-amino-methoxyphenyl-valeric acid (L-Amv) for AM-toxin I, L-alpha-amino-phenyl-valeric acid (L-Apv) for AM-toxin II, and L-alpha-amino-hydroxyphenyl-valeric acid (L-Ahv) for AM-toxin III. AM-toxins have two target sites for affecting susceptible apple cells; they cause invagination of the plasma membrane and electrolyte loss and chloroplast disorganization. The non-ribosomal peptide synthetase AMT1 contains 4 catalytic modules and is responsible for activation of each residue in AM-toxin. The aldo-keto reductase AMT2 catalyzes the conversion of 2-keto-isovaleric acid (2-KIV) to 2-hydroxy-isovaleric acid (2-HIV), one of the precursor residues incorporated by AMT1 during AM-toxin biosynthesis, by reduction of its ketone to an alcohol. The cytochrome P450 monooxygenase AMT3 and the thioesterase AMT4 are also important for AM-toxin production, but their exact function within the AM-toxin biosynthesis are not known yet. Up to 21 proteins (including AMT1 to AMT4) are predicted to be involved in AM-toxin biosynthesis since their expression ishighly up-regulated in AM-toxin-producing cultures. The chain is Aconitase AMT8 from Alternaria alternata (Alternaria rot fungus).